The sequence spans 191 residues: Shikimate kinase (191 aa).

ATP is bound at residue 14-19 (GSGKST). Residue serine 18 participates in Mg(2+) binding. Positions 36, 60, and 82 each coordinate substrate. Arginine 120 contacts ATP. Residue arginine 147 participates in substrate binding.

This sequence belongs to the shikimate kinase family. In terms of assembly, monomer. Mg(2+) is required as a cofactor.

It is found in the cytoplasm. It carries out the reaction shikimate + ATP = 3-phosphoshikimate + ADP + H(+). Its pathway is metabolic intermediate biosynthesis; chorismate biosynthesis; chorismate from D-erythrose 4-phosphate and phosphoenolpyruvate: step 5/7. Its function is as follows. Catalyzes the specific phosphorylation of the 3-hydroxyl group of shikimic acid using ATP as a cosubstrate. The chain is Shikimate kinase from Chlorobaculum tepidum (strain ATCC 49652 / DSM 12025 / NBRC 103806 / TLS) (Chlorobium tepidum).